The chain runs to 1135 residues: DNA-directed RNA polymerase I subunit RPA2 (1135 aa).

The tract at residues 1-24 is disordered; that stretch reads MDPGSRWRNLPSGPSLKHLTDPSY. Arginine 180 contacts RNA. The tract at residues 194–208 is loop B; the sequence is IRPKWKTRGPGYTQY. The tract at residues 236-247 is loop A; the sequence is LNFIYRKELFFL. Aspartate 367 contributes to the RNA binding site. 2 fork loop regions span residues 439-453 and 474-489; these read LRSKTGLGLLQDSGL and RGADFAKMRTTTVRRL. Aspartate 755 is a binding site for Mg(2+). Position 890 (lysine 890) interacts with RNA. Positions 1020 and 1036 each coordinate DNA. A Phosphoserine modification is found at serine 1051. 4 residues coordinate Zn(2+): cysteine 1070, cysteine 1073, cysteine 1098, and cysteine 1101. Residues 1070–1101 form a C4-type zinc finger; the sequence is CVKCGSLLSPLLEKPPPSWSAMRNRKYNCTLC.

The protein belongs to the RNA polymerase beta chain family. In terms of assembly, component of the RNA polymerase I (Pol I) complex consisting of 13 subunits: a ten-subunit catalytic core composed of POLR1A/RPA1, POLR1B/RPA2, POLR1C/RPAC1, POLR1D/RPAC2, POLR1H/RPA12, POLR2E/RPABC1, POLR2F/RPABC2, POLR2H/RPABC3, POLR2K/RPABC4 and POLR2L/RPABC5; a mobile stalk subunit POLR1F/RPA43 protruding from the core and additional subunits homologous to general transcription factors POLR1E/RPA49 and POLR1G/RPA34. Part of Pol I pre-initiation complex (PIC), in which Pol I core assembles with RRN3 and promoter-bound UTBF and SL1/TIF-IB complex. Requires Mg(2+) as cofactor.

Its subcellular location is the nucleus. It is found in the nucleolus. The protein localises to the chromosome. The enzyme catalyses RNA(n) + a ribonucleoside 5'-triphosphate = RNA(n+1) + diphosphate. In terms of biological role, catalytic core component of RNA polymerase I (Pol I), a DNA-dependent RNA polymerase which synthesizes ribosomal RNA precursors using the four ribonucleoside triphosphates as substrates. Transcribes 47S pre-rRNAs from multicopy rRNA gene clusters, giving rise to 5.8S, 18S and 28S ribosomal RNAs. Pol I-mediated transcription cycle proceeds through transcription initiation, transcription elongation and transcription termination stages. During transcription initiation, Pol I pre-initiation complex (PIC) is recruited by the selectivity factor 1 (SL1/TIF-IB) complex bound to the core promoter that precedes an rDNA repeat unit. The PIC assembly bends the promoter favoring the formation of the transcription bubble and promoter escape. Once the polymerase has escaped from the promoter it enters the elongation phase during which RNA is actively polymerized, based on complementarity with the template DNA strand. Highly processive, assembles in structures referred to as 'Miller trees' where many elongating Pol I complexes queue and transcribe the same rDNA coding regions. At terminator sequences downstream of the rDNA gene, PTRF interacts with Pol I and halts Pol I transcription leading to the release of the RNA transcript and polymerase from the DNA. Forms Pol I active center together with the largest subunit POLR1A/RPA1. Appends one nucleotide at a time to the 3' end of the nascent RNA, with POLR1A/RPA1 contributing a Mg(2+)-coordinating DxDGD motif, and POLR1B/RPA2 participating in the coordination of a second Mg(2+) ion and providing lysine residues believed to facilitate Watson-Crick base pairing between the incoming nucleotide and the template base. Typically, Mg(2+) ions direct a 5' nucleoside triphosphate to form a phosphodiester bond with the 3' hydroxyl of the preceding nucleotide of the nascent RNA, with the elimination of pyrophosphate. Has proofreading activity: Pauses and backtracks to allow the cleavage of a missincorporated nucleotide via POLR1H/RPA12. High Pol I processivity is associated with decreased transcription fidelity. In Homo sapiens (Human), this protein is DNA-directed RNA polymerase I subunit RPA2.